Here is a 302-residue protein sequence, read N- to C-terminus: Phosphoribosylaminoimidazole-succinocarboxamide synthase (302 aa).

It belongs to the SAICAR synthetase family.

It catalyses the reaction 5-amino-1-(5-phospho-D-ribosyl)imidazole-4-carboxylate + L-aspartate + ATP = (2S)-2-[5-amino-1-(5-phospho-beta-D-ribosyl)imidazole-4-carboxamido]succinate + ADP + phosphate + 2 H(+). It functions in the pathway purine metabolism; IMP biosynthesis via de novo pathway; 5-amino-1-(5-phospho-D-ribosyl)imidazole-4-carboxamide from 5-amino-1-(5-phospho-D-ribosyl)imidazole-4-carboxylate: step 1/2. This is Phosphoribosylaminoimidazole-succinocarboxamide synthase from Polaromonas sp. (strain JS666 / ATCC BAA-500).